We begin with the raw amino-acid sequence, 269 residues long: uncharacterized protein (269 aa).

ATP is bound by residues 12-19 and 130-137; these read GKGGTGKS and GYLIVGKS.

The protein to M.jannaschii MJ0578.

This is an uncharacterized protein from Methanocaldococcus jannaschii (strain ATCC 43067 / DSM 2661 / JAL-1 / JCM 10045 / NBRC 100440) (Methanococcus jannaschii).